Here is a 102-residue protein sequence, read N- to C-terminus: Acid shock protein (102 aa).

A signal peptide spans 1 to 21 (MKKVLALVVAAAMGLSSAAFA). A compositionally biased stretch (low complexity) spans 22–41 (AETATTPAPTATTTKAAPAK). A propeptide spanning residues 22 to 58 (AETATTPAPTATTTKAAPAKTTHHKKQHKAAPAQKAQ) is cleaved from the precursor. Residues 22 to 102 (AETATTPAPT…PAKPAAQPAA (81 aa)) are disordered. A compositionally biased stretch (basic residues) spans 80–90 (AAKKHAKKHSH). Over residues 91–102 (QQPAKPAAQPAA) the composition is skewed to low complexity.

The protein belongs to the Asr family. Proteolytic processing gives rise to the active protein.

Its subcellular location is the periplasm. Required for growth and/or survival at acidic conditions. The protein is Acid shock protein of Escherichia coli O17:K52:H18 (strain UMN026 / ExPEC).